Consider the following 396-residue polypeptide: Argininosuccinate synthase (396 aa).

ATP is bound at residue 9–17 (AYSGGLDTS). An L-citrulline-binding site is contributed by Tyr-85. ATP is bound at residue Gly-115. Positions 117, 121, and 122 each coordinate L-aspartate. Asn-121 serves as a coordination point for L-citrulline. L-citrulline is bound by residues Arg-125, Ser-173, Glu-258, and Tyr-270.

The protein belongs to the argininosuccinate synthase family. Type 1 subfamily. Homotetramer.

It is found in the cytoplasm. The catalysed reaction is L-citrulline + L-aspartate + ATP = 2-(N(omega)-L-arginino)succinate + AMP + diphosphate + H(+). The protein operates within amino-acid biosynthesis; L-arginine biosynthesis; L-arginine from L-ornithine and carbamoyl phosphate: step 2/3. This is Argininosuccinate synthase from Streptococcus agalactiae serotype Ia (strain ATCC 27591 / A909 / CDC SS700).